A 2591-amino-acid chain; its full sequence is Eukaryotic translation initiation factor 2-alpha kinase PK4 (2591 aa).

Residues 1 to 16 (MYNKGINICLNEDNKC) lie on the Cytoplasmic side of the membrane. Residues 17 to 37 (IILLHIIFNKCIVSFVASHIL) traverse the membrane as a helical segment. Over 38–1488 (VEGKICFLNR…EFSSQKHKKS (1451 aa)) the chain is Lumenal. A disordered region spans residues 1028–1048 (KKKRNSKKGENRNKKRKTQKR). Residues 1489 to 1509 (WYWNIFYAITLVIVIPFIFIY) traverse the membrane as a helical segment. Residues 1510–2591 (RLFKKQTNNK…NIINGNEVDH (1082 aa)) are Cytoplasmic-facing. Residues 1781 to 1840 (NLNSADEENKSPYAKKYSDEKKNRSKSSKYIENTQSNNNDNTNGNMNVGNHINNDKMNNK) are disordered. The segment covering 1813–1832 (NTQSNNNDNTNGNMNVGNHI) has biased composition (low complexity). ATP is bound by residues 1880–1888 (IGQGGFGSV) and lysine 1905. Disordered stretches follow at residues 2123 to 2157 (DNDESNGSGHSKKNDNDERKSLNNQNGIYNTGGDI) and 2183 to 2212 (IKNTQGTSINGTINRNTISDETGTQGTNNN). Basic and acidic residues predominate over residues 2134–2143 (KKNDNDERKS). The 352-residue stretch at 2181 to 2532 (MTIKNTQGTS…KIKVLLDPHL (352 aa)) folds into the Protein kinase domain. The active-site Proton acceptor is aspartate 2369. The residue at position 2436 (threonine 2436) is a Phosphothreonine; by autocatalysis. Polar residues predominate over residues 2558–2574 (STNPNGDIKENVNQNNL). A disordered region spans residues 2558 to 2591 (STNPNGDIKENVNQNNLVDDKGNNNIINGNEVDH). Residues 2580–2591 (NNNIINGNEVDH) are compositionally biased toward low complexity.

The protein belongs to the protein kinase superfamily. Ser/Thr protein kinase family. GCN2 subfamily. In terms of assembly, may form oligomers in response to stress; oligomerization may result in catalytic activity. Interacts with BIP; the interaction is disrupted in response to stress.

The protein resides in the endoplasmic reticulum membrane. The enzyme catalyses L-seryl-[protein] + ATP = O-phospho-L-seryl-[protein] + ADP + H(+). The catalysed reaction is L-threonyl-[protein] + ATP = O-phospho-L-threonyl-[protein] + ADP + H(+). Dissociation from BIP and oligomerization, may results autophosphorylation and kinase activity induction. In terms of biological role, during the asexual blood stage, phosphorylates translation factor eIF2alpha in late schizonts resulting in protein translation inhibition. Plays a role in trophozoite differentiation into schizonts. In Plasmodium berghei (strain Anka), this protein is Eukaryotic translation initiation factor 2-alpha kinase PK4.